Reading from the N-terminus, the 127-residue chain is Aspartate 1-decarboxylase (127 aa).

Ser25 acts as the Schiff-base intermediate with substrate; via pyruvic acid in catalysis. Ser25 is subject to Pyruvic acid (Ser). Thr57 lines the substrate pocket. Tyr58 serves as the catalytic Proton donor. 73–75 (GAA) contacts substrate.

Belongs to the PanD family. As to quaternary structure, heterooctamer of four alpha and four beta subunits. The cofactor is pyruvate. In terms of processing, is synthesized initially as an inactive proenzyme, which is activated by self-cleavage at a specific serine bond to produce a beta-subunit with a hydroxyl group at its C-terminus and an alpha-subunit with a pyruvoyl group at its N-terminus.

It localises to the cytoplasm. The enzyme catalyses L-aspartate + H(+) = beta-alanine + CO2. The protein operates within cofactor biosynthesis; (R)-pantothenate biosynthesis; beta-alanine from L-aspartate: step 1/1. In terms of biological role, catalyzes the pyruvoyl-dependent decarboxylation of aspartate to produce beta-alanine. The sequence is that of Aspartate 1-decarboxylase from Neisseria meningitidis serogroup C / serotype 2a (strain ATCC 700532 / DSM 15464 / FAM18).